Reading from the N-terminus, the 252-residue chain is MVEVRNVSKQYGGKVVLEETSVTIQKGKITSFIGPNGAGKSTLLSIMSRLIKKDSGEIYIDGQEIGACDSKELAKKMSILKQANQINIRLTIKDLVSFGRFPYSQGRLTEEDWVHINQALSYMKLEDIQDKYLDQLSGGQCQRAFIAMVIAQDTDYIFLDEPLNNLDMKHSVEIMKLLKRLVEELGKTIVIVIHDINFASVYSDYIVALKNGRIVKEGPPEEMIETSVLEEIYDMTIPIQTIDNQRIGVYFS.

Residues 2–236 enclose the ABC transporter domain; that stretch reads VEVRNVSKQY…SVLEEIYDMT (235 aa). Residue 34–41 participates in ATP binding; it reads GPNGAGKS.

This sequence belongs to the ABC transporter superfamily. The complex is composed of two ATP-binding proteins (YclP), two transmembrane proteins (YclN and YclO) and a solute-binding protein (YclQ).

It is found in the cell membrane. The catalysed reaction is a Fe(III)-siderophore(out) + ATP + H2O = a Fe(III)-siderophore(in) + ADP + phosphate + H(+). Its function is as follows. Part of the ABC transporter complex YclNOPQ involved in uptake of ferric-petrobactin. Petrobactin is a photoreactive 3,4-catecholate siderophore produced by many members of the B.cereus group, including B.anthracis. Probably responsible for energy coupling to the transport system. This Bacillus subtilis (strain 168) protein is Petrobactin import ATP-binding protein YclP (yclP).